The sequence spans 560 residues: MSTSVFNRRWATLLLESLTRHGVRHICIAPGSRSTPLTLSAADNHALICHTHFDERGLGHLALGLAKASREPVAIIVTSGTAAANLYPAIIEAGLTGERLVVLTADRPPELIDCGANQAIRQHALYASHPTLALDLPRPTPDIPATWLVSSVDSAMARLTHGALHINCPFAEPLYGADDGTAYQDWLMTLGDWWNSREPWLREMRQSTLVVQPDWPQWRQKRGVVLAGRVSAEQGARLAAWANELGWPLIGDVLSQSGQPLPCADIWLAHPEAASLLRQAEIVLQFGGSLTGKRLLQWQEQCQPQEFWLIDDLPGRLDPAHHRGRRLVADVGEWLSAHPADKQTPWADLLVDIADRTQRQVDAHLASHFGEAQLAQRIPALLPPDGQLFVGNSLVVRLIDALAQLPQGYPVYGNRGASGIDGLISTLAGVQRATAKATLGIVGDLSALYDLNALALLRQSPAPLVLIVVNNNGGQIFSLLPTPVAQREAFYCMPQNVEFGHAAAMFGLNYVRAESWEQLADTVSDCWTQGGVTLLEVVVEPKDGAETLNELVAQVAAWTH.

The protein belongs to the TPP enzyme family. MenD subfamily. In terms of assembly, homodimer. The cofactor is Mg(2+). Mn(2+) is required as a cofactor. It depends on thiamine diphosphate as a cofactor.

It carries out the reaction isochorismate + 2-oxoglutarate + H(+) = 5-enolpyruvoyl-6-hydroxy-2-succinyl-cyclohex-3-ene-1-carboxylate + CO2. The protein operates within quinol/quinone metabolism; 1,4-dihydroxy-2-naphthoate biosynthesis; 1,4-dihydroxy-2-naphthoate from chorismate: step 2/7. It functions in the pathway quinol/quinone metabolism; menaquinone biosynthesis. Functionally, catalyzes the thiamine diphosphate-dependent decarboxylation of 2-oxoglutarate and the subsequent addition of the resulting succinic semialdehyde-thiamine pyrophosphate anion to isochorismate to yield 2-succinyl-5-enolpyruvyl-6-hydroxy-3-cyclohexene-1-carboxylate (SEPHCHC). This Pectobacterium atrosepticum (strain SCRI 1043 / ATCC BAA-672) (Erwinia carotovora subsp. atroseptica) protein is 2-succinyl-5-enolpyruvyl-6-hydroxy-3-cyclohexene-1-carboxylate synthase.